Consider the following 558-residue polypeptide: MNTINKYSKTITQDETQPAAQAMLYGIGLTEADMYKAQVGIVSTGYEGNTCNMHLNDLAKDVKFGVASENLVGLIFNTIGVSDGISNGTDGMRFSLVSRDIIADSIETVVSAQWYDAVLAVVGCDKNMPGSVMAMGRLNRPAIMIYGGSIHSGKWKGESLNIVSAFEALGKKFNNTITPEDFKGVIKNACPGAGACGGMYTANTMASAIEALGMSLPYSSSNPALSQEKKQECLDAGKAIRVLLEKDIKPKDIMTKKAFENAMTMVVVLGGSTNAVLHLIAMAHSVDIELTLQDFQKTSNNIPVLADLKPSGKYLMEDLHAVGGVPAVMKYLLENKLLHGDCLTVTGKTVAENLANIPSLHQGQTVFLPLKTPLKATGHLQILYGNLAPEGSVAKISGNEGDFFEGKAKVYNDEYTVIDGVKNGEVASGDVVVIRYCGPKGGPGMPEMLKPTSAIMGAGLGKNVALITDGRFSGGTHGFVVGHITPEAYDGGTIALVKDGDTITINTKNNTIQLKVSEEELTKRKSEWKQPKLKATKGVLYKYAQCVSSASKGCVTDN.

C51 lines the [2Fe-2S] cluster pocket. D83 is a binding site for Mg(2+). A [2Fe-2S] cluster-binding site is contributed by C124. Mg(2+)-binding residues include D125 and K126. Position 126 is an N6-carboxylysine (K126). C196 provides a ligand contact to [2Fe-2S] cluster. E447 lines the Mg(2+) pocket. S473 acts as the Proton acceptor in catalysis.

This sequence belongs to the IlvD/Edd family. Homodimer. [2Fe-2S] cluster serves as cofactor. Requires Mg(2+) as cofactor.

The enzyme catalyses (2R)-2,3-dihydroxy-3-methylbutanoate = 3-methyl-2-oxobutanoate + H2O. The catalysed reaction is (2R,3R)-2,3-dihydroxy-3-methylpentanoate = (S)-3-methyl-2-oxopentanoate + H2O. Its pathway is amino-acid biosynthesis; L-isoleucine biosynthesis; L-isoleucine from 2-oxobutanoate: step 3/4. The protein operates within amino-acid biosynthesis; L-valine biosynthesis; L-valine from pyruvate: step 3/4. Functions in the biosynthesis of branched-chain amino acids. Catalyzes the dehydration of (2R,3R)-2,3-dihydroxy-3-methylpentanoate (2,3-dihydroxy-3-methylvalerate) into 2-oxo-3-methylpentanoate (2-oxo-3-methylvalerate) and of (2R)-2,3-dihydroxy-3-methylbutanoate (2,3-dihydroxyisovalerate) into 2-oxo-3-methylbutanoate (2-oxoisovalerate), the penultimate precursor to L-isoleucine and L-valine, respectively. The polypeptide is Dihydroxy-acid dehydratase (Flavobacterium psychrophilum (strain ATCC 49511 / DSM 21280 / CIP 103535 / JIP02/86)).